The chain runs to 220 residues: Deoxyribose-phosphate aldolase (220 aa).

Asp-89 (proton donor/acceptor) is an active-site residue. Lys-150 acts as the Schiff-base intermediate with acetaldehyde in catalysis. The Proton donor/acceptor role is filled by Lys-182.

This sequence belongs to the DeoC/FbaB aldolase family. DeoC type 1 subfamily.

Its subcellular location is the cytoplasm. The catalysed reaction is 2-deoxy-D-ribose 5-phosphate = D-glyceraldehyde 3-phosphate + acetaldehyde. The protein operates within carbohydrate degradation; 2-deoxy-D-ribose 1-phosphate degradation; D-glyceraldehyde 3-phosphate and acetaldehyde from 2-deoxy-alpha-D-ribose 1-phosphate: step 2/2. In terms of biological role, catalyzes a reversible aldol reaction between acetaldehyde and D-glyceraldehyde 3-phosphate to generate 2-deoxy-D-ribose 5-phosphate. In Mycoplasmoides pirum (Mycoplasma pirum), this protein is Deoxyribose-phosphate aldolase.